We begin with the raw amino-acid sequence, 383 residues long: Probable endopolygalacturonase C (383 aa).

A signal peptide spans 1 to 16 (MVRQLILISSLLAAVA). A propeptide spanning residues 17–40 (VRAPADPAHPMVTEAPDVNLVEKR) is cleaved from the precursor. A disulfide bond links Cys44 and Cys62. PbH1 repeat units follow at residues 175–206 (STDL…DIGE) and 207–228 (STYI…AINS). Asp221 functions as the Proton donor in the catalytic mechanism. A disulfide bridge connects residues Cys223 and Cys239. His243 is an active-site residue. 2 PbH1 repeats span residues 253-279 (RDDN…RIKT) and 287-309 (VSEV…VIEQ). The N-linked (GlcNAc...) asparagine glycan is linked to Asn260. Disulfide bonds link Cys348–Cys353 and Cys372–Cys381.

The protein belongs to the glycosyl hydrolase 28 family.

The protein resides in the secreted. It catalyses the reaction (1,4-alpha-D-galacturonosyl)n+m + H2O = (1,4-alpha-D-galacturonosyl)n + (1,4-alpha-D-galacturonosyl)m.. In terms of biological role, involved in maceration and soft-rotting of plant tissue. Hydrolyzes the 1,4-alpha glycosidic bonds of de-esterified pectate in the smooth region of the plant cell wall. In Aspergillus niger, this protein is Probable endopolygalacturonase C (pgaC).